The chain runs to 90 residues: UPF0335 protein RPD_1405 (90 aa).

Belongs to the UPF0335 family.

The sequence is that of UPF0335 protein RPD_1405 from Rhodopseudomonas palustris (strain BisB5).